The chain runs to 217 residues: Large ribosomal subunit protein uL1 (217 aa).

Belongs to the universal ribosomal protein uL1 family. As to quaternary structure, part of the 50S ribosomal subunit.

Binds directly to 23S rRNA. Probably involved in E site tRNA release. Its function is as follows. Protein L1 is also a translational repressor protein, it controls the translation of its operon by binding to its mRNA. The chain is Large ribosomal subunit protein uL1 from Thermoplasma acidophilum (strain ATCC 25905 / DSM 1728 / JCM 9062 / NBRC 15155 / AMRC-C165).